The chain runs to 90 residues: RNA-binding protein Hfq (90 aa).

In terms of domain architecture, Sm spans 9–68 (DPFLNALRRERVPVSIYLVNGIKLQGQVESFDQFVILLKNTVSQMVYKHAISTVVPARPF).

The protein belongs to the Hfq family. As to quaternary structure, homohexamer.

Functionally, RNA chaperone that binds small regulatory RNA (sRNAs) and mRNAs to facilitate mRNA translational regulation in response to envelope stress, environmental stress and changes in metabolite concentrations. Also binds with high specificity to tRNAs. The polypeptide is RNA-binding protein Hfq (Shewanella baltica (strain OS155 / ATCC BAA-1091)).